The primary structure comprises 471 residues: Tryptophanase (471 aa).

N6-acetyllysine is present on residues Lys-5, Lys-115, and Lys-156. An N6-(pyridoxal phosphate)lysine modification is found at Lys-270. Lys-450 carries the N6-acetyllysine modification.

It belongs to the beta-eliminating lyase family. In terms of assembly, homotetramer. Pyridoxal 5'-phosphate is required as a cofactor.

It carries out the reaction L-tryptophan + H2O = indole + pyruvate + NH4(+). It participates in amino-acid degradation; L-tryptophan degradation via pyruvate pathway; indole and pyruvate from L-tryptophan: step 1/1. This chain is Tryptophanase, found in Escherichia coli O9:H4 (strain HS).